The sequence spans 860 residues: MVSIAFYGGIPGGISTPITQQSEKSKCEENTIFQPYCYNNNSKNSMAESKEARDQEMNLKEESKEEKRRNDWWKIGMFLLCLAGTTGGILWWYEGLPQQHYIGLVAIGGRLNGSGQSNAIECWGSFPGCRPFQNYFSYETNRSMHMDNDTATLLEAYHREITFIYKSSCTDSDHCQEYQCKQVNLNSSDPSNSVRVEDVTNTTEYWGFKWLECNQTENFKTILVPENEMVKINDNDTWIPKGCNETWARVKRCPIDILYGIHPIRLSVQPPFFLVQEKGTADTSRIGNCGPTIFLGVLEDNKGVVRGNGTACKVSDLNINRKDYTGIYQVPIFYTCNFTNITSCNNESIISVIMYETNQVQYLLCNNNNNSNNYNCVVQSFGVIGQAHLELPRPNKRIRNQSFNQYNCSINNKTELETWKLVNTSGITPLPISSEANTGLIRHKRDFGISAIVAAIVAATAIAASATMSYVALTEVNKIMEVQNHTFEVENSTLNGMDLIEQQIKILYAMILQTHADVQLLKEKQQVEETFNLIGCIERTHVFCHTGHPWNMSWGHLNESTQWDDWVSKMEDLNQEILTTLHGARNNLAQSMITFNTPDSIAQFGKDLWSHIGNWIPGLGASIIKYIVMFLLIYLLLTSSPKILRALWKVTSGAGSSGSRYLKKKFYHKHASREDTWDQAQHNIHLAGVTGGSGNKYCKQKYSRNDWNGESEEYNRRPKSWVKSIETFGESYISEKTKGEISQPGAAINEHKNGSGGNNPHQGSLDLEIRSEGGNIYDCCIKAQEGTLAIPCCGFPLWLFWGLVIIVGRIAGYGLRGFAVIIRICIRGLNLIFEIIRKMLDYIGRALNPGTSHVSMPQYV.

Positions 1-6 (MVSIAF) are excised as a propeptide. At 7–614 (YGGIPGGIST…GKDLWSHIGN (608 aa)) the chain is on the extracellular side. 18 N-linked (GlcNAc...) asparagine; by host glycosylation sites follow: N40, N112, N141, N148, N186, N201, N214, N235, N244, N308, N337, N340, N346, N369, N400, N407, N412, and N423. A fusion peptide region spans residues 447–467 (FGISAIVAAIVAATAIAASAT). N484 and N491 each carry an N-linked (GlcNAc...) asparagine; by host glycan. Residues 499-514 (LIEQQIKILYAMILQT) form an immunosuppression region. 2 N-linked (GlcNAc...) asparagine; by host glycosylation sites follow: N551 and N558. Coiled coils occupy residues 577 to 625 (ILTT…SIIK) and 664 to 700 (KKFYHKHASREDTWDQAQHNIHLAGVTGGSGNKYCKQ). The chain crosses the membrane as a helical span at residues 615 to 635 (WIPGLGASIIKYIVMFLLIYL). The Cytoplasmic segment spans residues 636–860 (LLTSSPKILR…TSHVSMPQYV (225 aa)). Residues 746–765 (AAINEHKNGSGGNNPHQGSL) form a disordered region.

In terms of assembly, the mature envelope protein (Env) consists of a trimer of SU-TM heterodimers attached by noncovalent interactions or by a labile interchain disulfide bond. Specific enzymatic cleavages in vivo yield mature proteins. Envelope glycoproteins are synthesized as an inactive precursor that is N-glycosylated and processed likely by host cell furin or by a furin-like protease in the Golgi to yield the mature SU and TM proteins. The cleavage site between SU and TM requires the minimal sequence [KR]-X-[KR]-R.

The protein localises to the virion membrane. It is found in the host cell membrane. In terms of biological role, the surface protein (SU) attaches the virus to the host cell by binding to its receptor. This interaction triggers the refolding of the transmembrane protein (TM) and is thought to activate its fusogenic potential by unmasking its fusion peptide. Fusion occurs at the host cell plasma membrane. The transmembrane protein (TM) acts as a class I viral fusion protein. Under the current model, the protein has at least 3 conformational states: pre-fusion native state, pre-hairpin intermediate state, and post-fusion hairpin state. During viral and target cell membrane fusion, the coiled coil regions (heptad repeats) assume a trimer-of-hairpins structure, positioning the fusion peptide in close proximity to the C-terminal region of the ectodomain. The formation of this structure appears to drive apposition and subsequent fusion of viral and target cell membranes. Membranes fusion leads to delivery of the nucleocapsid into the cytoplasm. This Equine infectious anemia virus (isolate P3.2-5) (EIAV) protein is Envelope glycoprotein (env).